Consider the following 461-residue polypeptide: Bifunctional protein HldE (461 aa).

Residues 1–312 (MLEFLSQQKP…IRSFKSMSFE (312 aa)) form a ribokinase region. An ATP-binding site is contributed by 191 to 194 (NKKE). Asp259 is a catalytic residue. The cytidylyltransferase stretch occupies residues 334-461 (FTNGCFDIVH…KIIEKIKDKK (128 aa)).

The protein in the N-terminal section; belongs to the carbohydrate kinase PfkB family. In the C-terminal section; belongs to the cytidylyltransferase family. In terms of assembly, homodimer.

It carries out the reaction D-glycero-beta-D-manno-heptose 7-phosphate + ATP = D-glycero-beta-D-manno-heptose 1,7-bisphosphate + ADP + H(+). It catalyses the reaction D-glycero-beta-D-manno-heptose 1-phosphate + ATP + H(+) = ADP-D-glycero-beta-D-manno-heptose + diphosphate. It participates in nucleotide-sugar biosynthesis; ADP-L-glycero-beta-D-manno-heptose biosynthesis; ADP-L-glycero-beta-D-manno-heptose from D-glycero-beta-D-manno-heptose 7-phosphate: step 1/4. It functions in the pathway nucleotide-sugar biosynthesis; ADP-L-glycero-beta-D-manno-heptose biosynthesis; ADP-L-glycero-beta-D-manno-heptose from D-glycero-beta-D-manno-heptose 7-phosphate: step 3/4. Catalyzes the phosphorylation of D-glycero-D-manno-heptose 7-phosphate at the C-1 position to selectively form D-glycero-beta-D-manno-heptose-1,7-bisphosphate. Functionally, catalyzes the ADP transfer from ATP to D-glycero-beta-D-manno-heptose 1-phosphate, yielding ADP-D-glycero-beta-D-manno-heptose. The protein is Bifunctional protein HldE of Campylobacter jejuni (strain RM1221).